The sequence spans 720 residues: Polyribonucleotide nucleotidyltransferase (720 aa).

Mg(2+)-binding residues include D487 and D493. The KH domain occupies 554 to 613 (PRIETFKIPTDKIREVIGTGGKVIREIVEKTGAKVNIEDDGTVKVASSDGEAMKAAIKWI). Residues 623–691 (GQIYDGTVVK…DRGKTRLSMK (69 aa)) enclose the S1 motif domain. Residues 699–720 (EDLEAKDKVAEGEKAPREAAGE) form a disordered region. A compositionally biased stretch (basic and acidic residues) spans 701–720 (LEAKDKVAEGEKAPREAAGE).

The protein belongs to the polyribonucleotide nucleotidyltransferase family. Mg(2+) is required as a cofactor.

It is found in the cytoplasm. It catalyses the reaction RNA(n+1) + phosphate = RNA(n) + a ribonucleoside 5'-diphosphate. In terms of biological role, involved in mRNA degradation. Catalyzes the phosphorolysis of single-stranded polyribonucleotides processively in the 3'- to 5'-direction. The sequence is that of Polyribonucleotide nucleotidyltransferase from Bradyrhizobium diazoefficiens (strain JCM 10833 / BCRC 13528 / IAM 13628 / NBRC 14792 / USDA 110).